Reading from the N-terminus, the 341-residue chain is MNSYLRKLVEGQHLTEEEMYEAGLLLLSDNILESEVAAFLVLLKAKGETAEEIYGLVRALREKALPFSNHIKGAMDNCGTGGDGAQTFNISTTSAFVLAGAGVKVAKHGNRAVSSKTGSADLLEELGVNISCTPGEIDYLLENVGIAFLFAPAMHPALRRIMKIRKELNVPTIFNLIGPLTNPVNLETQFVGIYKRDMLLPVAEVLQKLGRKQALVVNGSGFLDEASLQGENHVVVLKDNEIVEMSIDPEKYGFSRVKNEEIRGGNSKENAKITLGVLSGEKSVYRDTVLLNAGLALFANGRAETIEEGITLATHSIDSGKALAKLNLLIAASHEKLERVN.

5-phospho-alpha-D-ribose 1-diphosphate contacts are provided by residues G79, 82–83, T87, 89–92, 107–115, and S119; these read GD, NIST, and KHGNRAVSS. An anthranilate-binding site is contributed by G79. S91 contributes to the Mg(2+) binding site. N110 provides a ligand contact to anthranilate. R165 contributes to the anthranilate binding site. The Mg(2+) site is built by D224 and E225.

The protein belongs to the anthranilate phosphoribosyltransferase family. As to quaternary structure, homodimer. The cofactor is Mg(2+).

It carries out the reaction N-(5-phospho-beta-D-ribosyl)anthranilate + diphosphate = 5-phospho-alpha-D-ribose 1-diphosphate + anthranilate. It participates in amino-acid biosynthesis; L-tryptophan biosynthesis; L-tryptophan from chorismate: step 2/5. Functionally, catalyzes the transfer of the phosphoribosyl group of 5-phosphorylribose-1-pyrophosphate (PRPP) to anthranilate to yield N-(5'-phosphoribosyl)-anthranilate (PRA). The protein is Anthranilate phosphoribosyltransferase of Bacillus mycoides (strain KBAB4) (Bacillus weihenstephanensis).